Consider the following 216-residue polypeptide: NADH-quinone oxidoreductase subunit C (216 aa).

The protein belongs to the complex I 30 kDa subunit family. In terms of assembly, NDH-1 is composed of 14 different subunits. Subunits NuoB, C, D, E, F, and G constitute the peripheral sector of the complex.

The protein localises to the cell inner membrane. It carries out the reaction a quinone + NADH + 5 H(+)(in) = a quinol + NAD(+) + 4 H(+)(out). Its function is as follows. NDH-1 shuttles electrons from NADH, via FMN and iron-sulfur (Fe-S) centers, to quinones in the respiratory chain. The immediate electron acceptor for the enzyme in this species is believed to be ubiquinone. Couples the redox reaction to proton translocation (for every two electrons transferred, four hydrogen ions are translocated across the cytoplasmic membrane), and thus conserves the redox energy in a proton gradient. In Francisella tularensis subsp. holarctica (strain FTNF002-00 / FTA), this protein is NADH-quinone oxidoreductase subunit C.